Reading from the N-terminus, the 145-residue chain is MAVLTGLFGFFAYVRGAVSQRCFSTSGSLSAIQKMTRVRVVDNSALGNTPYHRPPRCIHVYNKSGVGKVGDQILLAIRGQKKKALIVGHRMPGSRMTPKFDSNNVVLIEDNGNPVGTRIKIPIPTSLRRREGEYSKVLAIAQNFV.

The transit peptide at 1-30 (MAVLTGLFGFFAYVRGAVSQRCFSTSGSLS) directs the protein to the mitochondrion.

Belongs to the universal ribosomal protein uL14 family. In terms of assembly, component of the mitochondrial ribosome large subunit (39S) which comprises a 16S rRNA and about 50 distinct proteins. Interacts with MALSU1.

It is found in the mitochondrion. May form part of 2 intersubunit bridges in the assembled ribosome. Upon binding to MALSU1, intersubunit bridge formation is blocked, preventing ribosome formation and repressing translation. In Rattus norvegicus (Rat), this protein is Large ribosomal subunit protein uL14m (Mrpl14).